Consider the following 465-residue polypeptide: UDP-N-acetylmuramate--L-alanine ligase (465 aa).

112-118 contributes to the ATP binding site; the sequence is GTHGKTT.

It belongs to the MurCDEF family.

It localises to the cytoplasm. It catalyses the reaction UDP-N-acetyl-alpha-D-muramate + L-alanine + ATP = UDP-N-acetyl-alpha-D-muramoyl-L-alanine + ADP + phosphate + H(+). It functions in the pathway cell wall biogenesis; peptidoglycan biosynthesis. In terms of biological role, cell wall formation. The protein is UDP-N-acetylmuramate--L-alanine ligase of Burkholderia cenocepacia (strain HI2424).